The chain runs to 413 residues: Arginine biosynthesis bifunctional protein ArgJ (413 aa).

Thr-163, Lys-189, Thr-200, Glu-286, Asn-408, and Thr-413 together coordinate substrate. Residue Thr-200 is the Nucleophile of the active site.

It belongs to the ArgJ family. Heterotetramer of two alpha and two beta chains.

The protein localises to the cytoplasm. It catalyses the reaction N(2)-acetyl-L-ornithine + L-glutamate = N-acetyl-L-glutamate + L-ornithine. The enzyme catalyses L-glutamate + acetyl-CoA = N-acetyl-L-glutamate + CoA + H(+). It functions in the pathway amino-acid biosynthesis; L-arginine biosynthesis; L-ornithine and N-acetyl-L-glutamate from L-glutamate and N(2)-acetyl-L-ornithine (cyclic): step 1/1. The protein operates within amino-acid biosynthesis; L-arginine biosynthesis; N(2)-acetyl-L-ornithine from L-glutamate: step 1/4. Catalyzes two activities which are involved in the cyclic version of arginine biosynthesis: the synthesis of N-acetylglutamate from glutamate and acetyl-CoA as the acetyl donor, and of ornithine by transacetylation between N(2)-acetylornithine and glutamate. This chain is Arginine biosynthesis bifunctional protein ArgJ, found in Staphylococcus aureus (strain Mu50 / ATCC 700699).